Here is a 161-residue protein sequence, read N- to C-terminus: Large ribosomal subunit protein bL17 (161 aa).

A disordered region spans residues 126–161 (TAAKKAPKTRRSRKKATASVAEAPTAEAASEEKAAE). A compositionally biased stretch (basic residues) spans 130 to 141 (KAPKTRRSRKKA). Residues 142-153 (TASVAEAPTAEA) are compositionally biased toward low complexity.

This sequence belongs to the bacterial ribosomal protein bL17 family. In terms of assembly, part of the 50S ribosomal subunit. Contacts protein L32.

In Parabacteroides distasonis (strain ATCC 8503 / DSM 20701 / CIP 104284 / JCM 5825 / NCTC 11152), this protein is Large ribosomal subunit protein bL17.